Consider the following 614-residue polypeptide: High-affinity choline transporter 1 (614 aa).

The chain crosses the membrane as a helical span at residues 6-26; sequence GVVSIVLFYLLILVVGIWAGR. At 27–44 the chain is on the cytoplasmic side; it reads KKQSGNDSEEEVMLAGRS. A helical transmembrane segment spans residues 45–65; sequence IGLFVGIFTMTATWVGGGYIN. Residues 66-75 are Extracellular-facing; it reads GTAEAIYTSG. Residues 76 to 96 traverse the membrane as a helical segment; sequence LVWCQAPFGYALSLVFGGIFF. Residues 97-119 are Cytoplasmic-facing; that stretch reads ANPMRKQGYITMLDPLQDSFGER. A helical membrane pass occupies residues 120–140; sequence MGGLLFLPALCGEVFWAAGIL. The Extracellular segment spans residues 141 to 158; that stretch reads AALGATLSVIIDMDHRTS. Residues 159–179 traverse the membrane as a helical segment; sequence VILSSCIAIFYTLFGGLYSVA. Residues 180–185 are Cytoplasmic-facing; the sequence is YTDVIQ. The helical transmembrane segment at 186 to 206 threads the bilayer; that stretch reads LFCIFIGLWMCIPFAWSNEHV. Residues 207-225 are Extracellular-facing; sequence GSLSDLEVDWIGHVEPKKH. Residues 226–246 traverse the membrane as a helical segment; sequence WLYIDYGLLLVFGGIPWQVYF. The Cytoplasmic portion of the chain corresponds to 247–262; that stretch reads QRVLSSKTAGRAQLLS. A helical membrane pass occupies residues 263–283; sequence YVAAAGCILMAIPPVLIGAIA. Residues 284-305 lie on the Extracellular side of the membrane; that stretch reads KATPWNETDYKGPYPLTVDETS. N-linked (GlcNAc...) asparagine glycosylation is present at Asn289. A helical transmembrane segment spans residues 306–326; that stretch reads MILPMVLQYLTPDFVSFFGLG. Topologically, residues 327–364 are cytoplasmic; it reads AVSAAVMSSADSSVLSAASMFARNVYKLIFRQKASEME. Residues 365-385 traverse the membrane as a helical segment; that stretch reads IIWVMRVAIIVVGILATIMAL. At 386–394 the chain is on the extracellular side; that stretch reads TIPSIYGLW. A helical membrane pass occupies residues 395-415; sequence SMCSDLVYVILFPQLLMVVHF. At 416–424 the chain is on the cytoplasmic side; it reads KKHCNTYGS. Residues 425-445 traverse the membrane as a helical segment; sequence LSAYIVALAIRLSGGEAILGL. Topologically, residues 446–467 are extracellular; the sequence is APLIKYPGYDEETKEQMFPFRT. The chain crosses the membrane as a helical span at residues 468-488; it reads MAMLLSLVTLISVSWWTKMMF. Over 489–614 the chain is Cytoplasmic; it reads ESGKLPPSYD…PTAEQDNTAF (126 aa). Residues 583–614 form a disordered region; that stretch reads ATGVKPSGGGGGHLQSQSGMAMPTAEQDNTAF.

Belongs to the sodium:solute symporter (SSF) (TC 2.A.21) family.

Its subcellular location is the membrane. Imports choline from the extracellular space to the neuron with high affinity. Rate-limiting step in acetylcholine synthesis. Sodium ion and chloride ion dependent. This chain is High-affinity choline transporter 1, found in Drosophila melanogaster (Fruit fly).